The following is a 246-amino-acid chain: Type III pantothenate kinase (246 aa).

6–13 (DVGNTHSV) is an ATP binding site. 103-106 (GADR) serves as a coordination point for substrate. Asp105 functions as the Proton acceptor in the catalytic mechanism. Position 125 (Asp125) interacts with K(+). Residue Thr128 participates in ATP binding. Residue Thr179 participates in substrate binding.

This sequence belongs to the type III pantothenate kinase family. In terms of assembly, homodimer. Requires NH4(+) as cofactor. K(+) is required as a cofactor.

The protein resides in the cytoplasm. The catalysed reaction is (R)-pantothenate + ATP = (R)-4'-phosphopantothenate + ADP + H(+). Its pathway is cofactor biosynthesis; coenzyme A biosynthesis; CoA from (R)-pantothenate: step 1/5. In terms of biological role, catalyzes the phosphorylation of pantothenate (Pan), the first step in CoA biosynthesis. The chain is Type III pantothenate kinase (coaX) from Thermotoga maritima (strain ATCC 43589 / DSM 3109 / JCM 10099 / NBRC 100826 / MSB8).